Here is a 149-residue protein sequence, read N- to C-terminus: Large ribosomal subunit protein uL13 (149 aa).

Belongs to the universal ribosomal protein uL13 family. In terms of assembly, part of the 50S ribosomal subunit.

This protein is one of the early assembly proteins of the 50S ribosomal subunit, although it is not seen to bind rRNA by itself. It is important during the early stages of 50S assembly. The polypeptide is Large ribosomal subunit protein uL13 (Bifidobacterium longum (strain DJO10A)).